Consider the following 30-residue polypeptide: Cyclotide mden-E (30 aa).

The segment at residues 1–30 is a cross-link (cyclopeptide (Gly-Asn)); that stretch reads GIPCGESCVYIPCITAAIGCSCKSKVCYRN. 3 disulfides stabilise this stretch: Cys4–Cys20, Cys8–Cys22, and Cys13–Cys27.

It belongs to the cyclotide family. Bracelet subfamily. This is a cyclic peptide.

Its function is as follows. Probably participates in a plant defense mechanism. The protein is Cyclotide mden-E of Melicytus dentatus (Tree violet).